A 230-amino-acid chain; its full sequence is Urease accessory protein UreF (230 aa).

The protein belongs to the UreF family. As to quaternary structure, ureD, UreF and UreG form a complex that acts as a GTP-hydrolysis-dependent molecular chaperone, activating the urease apoprotein by helping to assemble the nickel containing metallocenter of UreC. The UreE protein probably delivers the nickel.

The protein localises to the cytoplasm. Required for maturation of urease via the functional incorporation of the urease nickel metallocenter. The sequence is that of Urease accessory protein UreF from Cupriavidus metallidurans (strain ATCC 43123 / DSM 2839 / NBRC 102507 / CH34) (Ralstonia metallidurans).